The chain runs to 403 residues: Phosphopentomutase (403 aa).

The Mn(2+) site is built by Asp13, Asp298, His303, Asp339, His340, and His351.

It belongs to the phosphopentomutase family. Mn(2+) serves as cofactor.

The protein resides in the cytoplasm. It carries out the reaction 2-deoxy-alpha-D-ribose 1-phosphate = 2-deoxy-D-ribose 5-phosphate. The enzyme catalyses alpha-D-ribose 1-phosphate = D-ribose 5-phosphate. Its pathway is carbohydrate degradation; 2-deoxy-D-ribose 1-phosphate degradation; D-glyceraldehyde 3-phosphate and acetaldehyde from 2-deoxy-alpha-D-ribose 1-phosphate: step 1/2. In terms of biological role, isomerase that catalyzes the conversion of deoxy-ribose 1-phosphate (dRib-1-P) and ribose 1-phosphate (Rib-1-P) to deoxy-ribose 5-phosphate (dRib-5-P) and ribose 5-phosphate (Rib-5-P), respectively. The polypeptide is Phosphopentomutase (Streptococcus pyogenes serotype M28 (strain MGAS6180)).